We begin with the raw amino-acid sequence, 440 residues long: Cytochrome c biogenesis protein Ccs1 (440 aa).

3 consecutive transmembrane segments (helical) span residues 19-39 (LRLA…GTFI), 78-98 (NIWF…CTYT), and 164-184 (VGPI…ACGA).

Belongs to the Ccs1/CcsB family. As to quaternary structure, may interact with CcsA.

It is found in the plastid. The protein localises to the chloroplast thylakoid membrane. Its function is as follows. Required during biogenesis of c-type cytochromes (cytochrome c6 and cytochrome f) at the step of heme attachment. The sequence is that of Cytochrome c biogenesis protein Ccs1 from Emiliania huxleyi (Coccolithophore).